The primary structure comprises 403 residues: Protein IQ-DOMAIN 23 (403 aa).

A disordered region spans residues 1-43 (MGFFGRLFGSKKKSDKAASSRDKRRWSFTTRSSNSSKRAPAVT). The short motif at 10–17 (SKKKSDKA) is the Nuclear localization signal element. Polar residues predominate over residues 27-43 (SFTTRSSNSSKRAPAVT). A calmodulin-binding region spans residues 115-133 (QENIAAMKIQSAFRGYLAR). IQ domains lie at 116 to 144 (ENIAAMKIQSAFRGYLARRALRALKALVK) and 145 to 167 (LQALVRGHIVRKQTADMLRRMQT). Disordered stretches follow at residues 176–208 (RARASRSSHSSASFHSSTALLFPSSSSSPRSLH), 242–301 (ILEV…PTSR), and 381–403 (GGDSDRLNRNQSAKSRMHSSFLV). Basic and acidic residues predominate over residues 257–267 (LRSERNNESPR).

It belongs to the IQD family. Binds to multiple calmodulin (CaM) in the presence of Ca(2+) and CaM-like proteins.

The protein localises to the nucleus. Its subcellular location is the nucleolus. It localises to the cytoplasm. It is found in the cytoskeleton. The protein resides in the cell membrane. May be involved in cooperative interactions with calmodulins or calmodulin-like proteins. Recruits calmodulin proteins to microtubules, thus being a potential scaffold in cellular signaling and trafficking. May associate with nucleic acids and regulate gene expression at the transcriptional or post-transcriptional level. The chain is Protein IQ-DOMAIN 23 from Arabidopsis thaliana (Mouse-ear cress).